The sequence spans 730 residues: Polyribonucleotide nucleotidyltransferase (730 aa).

The Mg(2+) site is built by aspartate 489 and aspartate 495. The region spanning 556-615 (PKIDTIKVDVDKIKIVIGKGGETIDKIIEETGVKIDIDEDGNIAIYSSDQEAINRTKEII) is the KH domain. In terms of domain architecture, S1 motif spans 625–693 (GEIYEAEVVR…DKGRIDASMK (69 aa)). The segment at 691-730 (SMKALLPRPPRSEKSNKEDHQSVRHHGSPKDDKGKEKYDK) is disordered. The span at 700–730 (PRSEKSNKEDHQSVRHHGSPKDDKGKEKYDK) shows a compositional bias: basic and acidic residues.

Belongs to the polyribonucleotide nucleotidyltransferase family. Requires Mg(2+) as cofactor.

Its subcellular location is the cytoplasm. It carries out the reaction RNA(n+1) + phosphate = RNA(n) + a ribonucleoside 5'-diphosphate. Functionally, involved in mRNA degradation. Catalyzes the phosphorolysis of single-stranded polyribonucleotides processively in the 3'- to 5'-direction. This is Polyribonucleotide nucleotidyltransferase from Streptococcus mutans serotype c (strain ATCC 700610 / UA159).